The primary structure comprises 992 residues: UPF0182 protein BCG_3215c (992 aa).

7 consecutive transmembrane segments (helical) span residues 18–38 (ILIM…RLID), 63–83 (IVVC…GLAL), 113–133 (LVGI…AQSY), 175–195 (LVSV…FGGI), 210–230 (VQLV…YWLD), 259–279 (KLIL…AIAL), and 287–307 (IGLV…PLIV). Positions 906–938 (PTEAAVPPSPAANPPPPASGPQPPPVTAAPPVP) are disordered. Residues 912-938 (PPSPAANPPPPASGPQPPPVTAAPPVP) are compositionally biased toward pro residues.

It belongs to the UPF0182 family.

It is found in the cell membrane. This Mycobacterium bovis (strain BCG / Pasteur 1173P2) protein is UPF0182 protein BCG_3215c.